The sequence spans 713 residues: Undecaprenyl-diphosphooligosaccharide--protein glycotransferase (713 aa).

Topologically, residues 1 to 11 (MLKKEYLKNPY) are cytoplasmic. The helical transmembrane segment at 12-35 (LVLFAMIVLAYVFSVFCRFYWVWW) threads the bilayer. The Periplasmic portion of the chain corresponds to 36–96 (ASEFNEYFFN…YWLYKITPFS (61 aa)). A DXD motif 1 motif is present at residues 52–54 (SND). D54 provides a ligand contact to Mn(2+). Residues 97–122 (FESIILYMSTFLSSLVVIPIILLANE) traverse the membrane as a helical segment. At 123–125 (YKR) the chain is on the cytoplasmic side. The chain crosses the membrane as a helical span at residues 126-144 (PLMGFVAALLASVANSYYN). The Periplasmic segment spans residues 145-152 (RTMSGYYD). Position 152 (D152) interacts with Mn(2+). Positions 152–154 (DTD) match the DXD motif 2 motif. The helical transmembrane segment at 153–174 (TDMLVIVLPMFILFFMVRMILK) threads the bilayer. Over 175-176 (KD) the chain is Cytoplasmic. Residues 177 to 192 (FFSLIALPLFIGIYLW) traverse the membrane as a helical segment. Residues 193 to 197 (WYPSS) lie on the Periplasmic side of the membrane. Position 194-196 (194-196 (YPS)) interacts with [alpha-D-GalNAc-(1-&gt;4)]2-[beta-D-Glc-(1-&gt;3)]-[alpha-D-GalNAc-(1-&gt;4)]2-alpha-D-GalNAc-(1-&gt;3)-alpha-D-diNAcBac-tri-trans,hepta-cis-undecaprenyl diphosphate. A helical membrane pass occupies residues 198 to 215 (YTLNVALIGLFLIYTLIF). The Cytoplasmic portion of the chain corresponds to 216 to 220 (HRKEK). The helical transmembrane segment at 221-233 (IFYIAVILSSLTL) threads the bilayer. Topologically, residues 234–237 (SNIA) are periplasmic. The chain crosses the membrane as a helical span at residues 238–254 (WFYQSAIIVILFALFAL). Residues 255–260 (EQKRLN) are Cytoplasmic-facing. Residues 261-278 (FMIIGILGSATLIFLILS) traverse the membrane as a helical segment. Residues 279 to 324 (GGVDPILYQLKFYIFRSDESANLTQGFMYFNVNQTIQEVENVDFSE) lie on the Periplasmic side of the membrane. Y291 contacts [alpha-D-GalNAc-(1-&gt;4)]2-[beta-D-Glc-(1-&gt;3)]-[alpha-D-GalNAc-(1-&gt;4)]2-alpha-D-GalNAc-(1-&gt;3)-alpha-D-diNAcBac-tri-trans,hepta-cis-undecaprenyl diphosphate. A TIXE motif motif is present at residues 313 to 316 (TIQE). Residue E316 participates in Mn(2+) binding. Residues 325-347 (FMRRISGSEIVFLFSLFGFVWLL) traverse the membrane as a helical segment. The Cytoplasmic segment spans residues 348–352 (RKHKS). A helical transmembrane segment spans residues 353–369 (MIMALPILVLGFLALKG). The Periplasmic segment spans residues 370–373 (GLRF). R372 contacts [alpha-D-GalNAc-(1-&gt;4)]2-[beta-D-Glc-(1-&gt;3)]-[alpha-D-GalNAc-(1-&gt;4)]2-alpha-D-GalNAc-(1-&gt;3)-alpha-D-diNAcBac-tri-trans,hepta-cis-undecaprenyl diphosphate. Residues 374–396 (TIYSVPVMALGFGFLLSEFKAIL) form a helical membrane-spanning segment. Over 397–406 (VKKYSQLTSN) the chain is Cytoplasmic. The helical transmembrane segment at 407-427 (VCIVFATILTLAPVFIHIYNY) threads the bilayer. The Periplasmic segment spans residues 428–713 (KAPTVFSQNE…RDAKVFKLKI (286 aa)). An interacts with target acceptor peptide in protein substrate region spans residues 457 to 459 (WWD). The WWDYG motif motif lies at 457–461 (WWDYG). Y462 contributes to the [alpha-D-GalNAc-(1-&gt;4)]2-[beta-D-Glc-(1-&gt;3)]-[alpha-D-GalNAc-(1-&gt;4)]2-alpha-D-GalNAc-(1-&gt;3)-alpha-D-diNAcBac-tri-trans,hepta-cis-undecaprenyl diphosphate binding site. An N-linked (DATDGlc) asparagine glycan is attached at N534. The short motif at 568–575 (MSLIFSTV) is the MI motif element.

This sequence belongs to the STT3 family. Requires Mg(2+) as cofactor. The cofactor is Mn(2+).

It is found in the cell inner membrane. The enzyme catalyses tritrans,heptacis-undecaprenyl diphosphooligosaccharide + [protein]-L-asparagine = tritrans,heptacis-undecaprenyl diphosphate + a glycoprotein with the oligosaccharide chain attached by N-beta-D-glycosyl linkage to protein L-asparagine.. The protein operates within protein modification; protein glycosylation. Functionally, oligosaccharyl transferase (OST) that catalyzes the initial transfer of a defined glycan (GalNAc(2)GlcGalNAc(3)Bac(NAc)(2) in eubacteria, where Bac(NAc)(2) is di-N-acetyl bacillosamine) from the lipid carrier undecaprenol-pyrophosphate to an asparagine residue within an Asp/Glu-Asn-X-Ser/Thr consensus motif in nascent polypeptide chains, the first step in protein N-glycosylation. The chain is Undecaprenyl-diphosphooligosaccharide--protein glycotransferase (pglB) from Campylobacter jejuni subsp. jejuni serotype O:2 (strain ATCC 700819 / NCTC 11168).